Reading from the N-terminus, the 474-residue chain is Hydrogenobyrinate a,c-diamide synthase (474 aa).

In terms of domain architecture, GATase cobBQ-type spans Val269–Gln459. Residue Cys352 is the Nucleophile of the active site.

This sequence belongs to the CobB/CbiA family. It depends on Mg(2+) as a cofactor.

The enzyme catalyses hydrogenobyrinate + 2 L-glutamine + 2 ATP + 2 H2O = hydrogenobyrinate a,c-diamide + 2 L-glutamate + 2 ADP + 2 phosphate + 2 H(+). Its pathway is cofactor biosynthesis; adenosylcobalamin biosynthesis; cob(II)yrinate a,c-diamide from precorrin-2 (aerobic route): step 9/10. In terms of biological role, catalyzes the ATP-dependent amidation of the two carboxylate groups at positions a and c of hydrogenobyrinate, using either L-glutamine or ammonia as the nitrogen source. The polypeptide is Hydrogenobyrinate a,c-diamide synthase (Thermobifida fusca (strain YX)).